The sequence spans 125 residues: Type II secretion system protein I (125 aa).

Residues Met1 to Gly5 constitute a propeptide, leader sequence. Residue Met6 is modified to N-methylmethionine. The helical transmembrane segment at Met6–Leu26 threads the bilayer.

It belongs to the GSP I family. Type II secretion is composed of four main components: the outer membrane complex, the inner membrane complex, the cytoplasmic secretion ATPase and the periplasm-spanning pseudopilus. Interacts with core component OutG. Cleaved by prepilin peptidase. In terms of processing, methylated by prepilin peptidase at the amino group of the N-terminal methionine once the leader sequence is cleaved by prepilin peptidase.

The protein localises to the cell inner membrane. Its function is as follows. Component of the type II secretion system required for the energy-dependent secretion of extracellular factors such as proteases and toxins from the periplasm. Part of the pseudopilus tip complex that is critical for the recognition and binding of secretion substrates. This Dickeya chrysanthemi (Pectobacterium chrysanthemi) protein is Type II secretion system protein I (outI).